A 42-amino-acid chain; its full sequence is Daisho1 (42 aa).

The first 20 residues, 1-20, serve as a signal peptide directing secretion; the sequence is MKFFQAAALLLAMFAALANA. The propeptide at 21-26 is removed by a dipeptidylpeptidase; the sequence is EPVPQP. Threonine 41 carries the threonine amide modification.

In terms of tissue distribution, hemolymph (at protein level).

The protein localises to the secreted. In terms of biological role, peptide which plays a role in the humoral immune response to a subset of filamentous fungi, including F.oxysporum and F.verticillioides. The protein is Daisho1 of Drosophila melanogaster (Fruit fly).